The chain runs to 349 residues: MDMENLTWLHGKPTASGILKANPEDFVVVEDLGFEPDGEGEHLLVRIRKNGCNTQFVADYLARFAKLHPRLVSYAGLKDRHAVTEQWFCLHLPGKEAPDLATFELEGCEVLEAVRHKRKLRIGSLKGNAFTLVLRHITDRQDVEQRLQQIAAQGVPNYFGSQRFGRGGNNLVQARLWANNEIRVKERSKRSFYLSASRSAMFNLISSHRLAQQLSTTVLEGDALQLSGRGSWFVAQADELATLQQRVTAGELNITAPLPGDSELGTHGEALAFEQACLAEQTELLSLIKHERVEGSRRAVLLKPQNMISNWWDDVTLELSFWLPAGSFATSVVREIMNQDRADDTDIIE.

Residue F26 coordinates substrate. The active-site Nucleophile is D79. N128 is a binding site for substrate. The TRUD domain maps to 154-302 (GVPNYFGSQR…VEGSRRAVLL (149 aa)). F328 contributes to the substrate binding site.

The protein belongs to the pseudouridine synthase TruD family.

The enzyme catalyses uridine(13) in tRNA = pseudouridine(13) in tRNA. Responsible for synthesis of pseudouridine from uracil-13 in transfer RNAs. The protein is tRNA pseudouridine synthase D of Yersinia pseudotuberculosis serotype IB (strain PB1/+).